We begin with the raw amino-acid sequence, 405 residues long: Transposase from transposon Tn916 (405 aa).

In terms of domain architecture, Core-binding (CB) spans 79–163 (GKKMTLCQLY…SLKASFYIAI (85 aa)). In terms of domain architecture, Tyr recombinase spans 186 to 392 (VPKTVLTEEQ…TFDSAMAEMK (207 aa)). Catalysis depends on residues Arg225, Lys264, His343, Arg346, and His369. The O-(3'-phospho-DNA)-tyrosine intermediate role is filled by Tyr379.

This sequence belongs to the 'phage' integrase family.

In Enterococcus faecalis (Streptococcus faecalis), this protein is Transposase from transposon Tn916 (Int-Tn).